The chain runs to 308 residues: uncharacterized protein (308 aa).

The ABC transporter domain occupies 6–234; that stretch reads LHIEGLDKKI…TEKAIIEVQP (229 aa). 38–45 serves as a coordination point for ATP; the sequence is GPNGSGKT.

Belongs to the ABC transporter superfamily.

This is an uncharacterized protein from Bacillus subtilis (strain 168).